The chain runs to 203 residues: Small ribosomal subunit protein uS4 (203 aa).

The S4 RNA-binding domain maps to 93-154 (RRFDNVVYRC…KSRNLDAVAD (62 aa)).

The protein belongs to the universal ribosomal protein uS4 family. In terms of assembly, part of the 30S ribosomal subunit. Contacts protein S5. The interaction surface between S4 and S5 is involved in control of translational fidelity.

Functionally, one of the primary rRNA binding proteins, it binds directly to 16S rRNA where it nucleates assembly of the body of the 30S subunit. Its function is as follows. With S5 and S12 plays an important role in translational accuracy. The sequence is that of Small ribosomal subunit protein uS4 from Chlorobaculum parvum (strain DSM 263 / NCIMB 8327) (Chlorobium vibrioforme subsp. thiosulfatophilum).